A 248-amino-acid polypeptide reads, in one-letter code: Type II methyltransferase M.AquIA (248 aa).

One can recognise an SAM-dependent MTase C5-type domain in the interval 3 to 248 (KKLISLFSGA…IKDRIKNHGY (246 aa)). Residue C82 is part of the active site.

Belongs to the class I-like SAM-binding methyltransferase superfamily. C5-methyltransferase family. As to quaternary structure, heterodimer of an alpha and a beta subunit.

The enzyme catalyses a 2'-deoxycytidine in DNA + S-adenosyl-L-methionine = a 5-methyl-2'-deoxycytidine in DNA + S-adenosyl-L-homocysteine + H(+). A methylase, recognizes the double-stranded sequence 5'-CYCGRG-3', methylates C-1 on both strands, and protects the DNA from cleavage by the AquI endonuclease. This chain is Type II methyltransferase M.AquIA (aquIMA), found in Picosynechococcus sp. (strain ATCC 27264 / PCC 7002 / PR-6) (Agmenellum quadruplicatum).